The primary structure comprises 267 residues: Ribosyldihydronicotinamide dehydrogenase-like protein traD (267 aa).

Residues H9, 15-16 (LN), and 100-103 (LWWF) each bind FAD. Residue 122-124 (GHG) participates in substrate binding. FAD contacts are provided by residues 152–155 (TLGG) and Y160.

The protein belongs to the NAD(P)H dehydrogenase (quinone) family. As to quaternary structure, homodimer. The cofactor is FAD.

It participates in secondary metabolite biosynthesis. Functionally, ribosyldihydronicotinamide dehydrogenase-like protein; part of the tra gene cluster that produces terrestric acid. The clavatol biosynthesis cluster cla and the terrestric acid cluster tra are both involved in the production of peniphenones and penilactones. The non-reducing PKS claF is responsible for the formation of clavatol from successive condensations of 3 malonyl-CoA units, presumably with a simple acetyl-CoA starter unit, and 2 methylation steps. The esterase claE probably collaborates with claF by catalyzing the hydrolysis of ACP-bound acyl intermediates to free the ACP from stalled intermediates. The clavatol oxidase claD then converts clavatol to hydroxyclavatol. Spontaneous dehydration of hydroxyclavatol leads to the accumulation of the highly active ortho-quinone methide. On the other hand, the PKS-NRPS hybrid traA is involved in the formation of crustosic acid, with the help of traB and traD. The polyketide synthase module (PKS) of traA is responsible for the synthesis of the polyketide backbone via the condensation of an acetyl-CoA starter unit with 3 malonyl-CoA units. The downstream nonribosomal peptide synthetase (NRPS) module then amidates the carboxyl end of the polyketide with L-malic acid. Because traA lacks a designated enoylreductase (ER) domain, the required activity is provided the enoyl reductase traG. Crustosic acid undergoes decarboxylation and isomerization to the terrestric acid, catalyzed by the 2-oxoglutarate-dependent dioxygenase traH. Both acids are further converted to the 2 gamma-butyrolactones (R)-5-methyltetronic acid and (S)-5-carboxylmethyltetronic acid, with involvement of the cytochrome P450 monooxygenase claJ. Spontaneous addition of the methide to these gamma-butyrolactones leads to peniphenone D and penilactone D, which undergo again stereospecific attacking by methide to give penilactones A and B. The chain is Ribosyldihydronicotinamide dehydrogenase-like protein traD from Penicillium crustosum (Blue mold fungus).